Consider the following 555-residue polypeptide: Synaptotagmin-14 (555 aa).

At 1 to 24 the chain is on the extracellular side; the sequence is MAIEGGERTCGVHELICIRKVSPE. A helical; Signal-anchor for type III membrane protein membrane pass occupies residues 25–47; sequence AVGFLSAVGVFIILMLLLFLYIN. At 48–555 the chain is on the cytoplasmic side; it reads KKFCFENVGG…VCRWHALLES (508 aa). 2 disordered regions span residues 157–179 and 222–257; these read TPPLDELQPPPYQDDSGSPHLSC and GYEEDVPSDSTAVLSPEDMSAQGSSSQLPKPFDPEP. C2 domains follow at residues 260–379 and 415–550; these read KYGT…SLPV and SVPE…CRWH.

It belongs to the synaptotagmin family. As to quaternary structure, homodimer. Can also form heterodimers. In terms of tissue distribution, highly expressed in fetal and adult brain tissue.

It is found in the membrane. Its function is as follows. May be involved in the trafficking and exocytosis of secretory vesicles in non-neuronal tissues. Is Ca(2+)-independent. The chain is Synaptotagmin-14 (SYT14) from Homo sapiens (Human).